We begin with the raw amino-acid sequence, 121 residues long: Protein yippee (121 aa).

One can recognise a Yippee domain in the interval 13-110 (KLFNCAQCHT…LEYALITEAE (98 aa)). Zn(2+)-binding residues include C17, C20, C73, and C76.

The protein belongs to the yippee family. As to quaternary structure, interacts with hemolin.

This chain is Protein yippee, found in Drosophila melanogaster (Fruit fly).